A 79-amino-acid polypeptide reads, in one-letter code: Translation initiation factor IF-1, chloroplastic (79 aa).

Residues 1–74 enclose the S1-like domain; the sequence is MTRKNIDLIE…HRGRITFRLR (74 aa).

This sequence belongs to the IF-1 family. As to quaternary structure, component of the 30S ribosomal translation pre-initiation complex which assembles on the 30S ribosome in the order IF-2 and IF-3, IF-1 and N-formylmethionyl-tRNA(fMet); mRNA recruitment can occur at any time during PIC assembly.

It is found in the plastid. Its subcellular location is the chloroplast. Functionally, one of the essential components for the initiation of protein synthesis. Stabilizes the binding of IF-2 and IF-3 on the 30S subunit to which N-formylmethionyl-tRNA(fMet) subsequently binds. Helps modulate mRNA selection, yielding the 30S pre-initiation complex (PIC). Upon addition of the 50S ribosomal subunit IF-1, IF-2 and IF-3 are released leaving the mature 70S translation initiation complex. The sequence is that of Translation initiation factor IF-1, chloroplastic from Chlorella vulgaris (Green alga).